The chain runs to 185 residues: Photosystem I assembly protein Ycf4 (185 aa).

2 helical membrane passes run 20–40 and 57–77; these read GNFFWACILFLGSLGFLAVGA and ILFFPQGVVMSFYGIAGLFIS.

Belongs to the Ycf4 family.

The protein localises to the plastid. It localises to the chloroplast thylakoid membrane. Seems to be required for the assembly of the photosystem I complex. This Sorghum bicolor (Sorghum) protein is Photosystem I assembly protein Ycf4.